A 435-amino-acid polypeptide reads, in one-letter code: Beta-arrestin arr-1 (435 aa).

The tract at residues 358–382 is disordered; the sequence is LTHSKPPESPERTDRGLPSIEATNG. The segment covering 362-372 has biased composition (basic and acidic residues); the sequence is KPPESPERTDR. Positions 390 to 394 match the Clathrin box motif; the sequence is LIQLH. Positions 404 to 414 match the [DE]-X(1,2)-F-X-X-[FL]-X-X-X-R motif motif; it reads DLIFEDFARMR. Positions 416 to 435 are disordered; that stretch reads HGNDSEDQPSPSANLPPSLL. Positions 424-435 are enriched in low complexity; sequence PSPSANLPPSLL.

Belongs to the arrestin family. Component of a complex composed of arr-1, daf-18 and mpz-1. Within the complex, interacts (via C-terminus) with mpz-1 (via PDZ domain) and phosphatase daf-18. May interact (via C-terminus) with clathrin chc-1 and beta-2 adaptin (AP2) apb-1. In terms of tissue distribution, expressed in head neurons, nerve ring and ventral nerve cord (at protein level). Expressed in the nervous system including the nerve ring and the ventral and dorsal nerve cords. Highly expressed in amphid chemosensory neurons AWA, AWB, AWC, ADL and ASH, and in hermaphrodite specific neuron HSN. Also expressed in the intestine.

The protein localises to the perikaryon. It localises to the cell projection. The protein resides in the dendrite. Adapter protein required for olfactory adaptation and recovery to volatile odorants, probably by desensitization of G-protein coupled receptors (GPCR). May play a role in clathrin-mediated GPCR endocytosis. Acts as a positive regulator of insulin-like daf-2 signaling pathway probably by forming a complex with mpz-1 and phosphatase daf-18 likely resulting in daf-18 inhibition. Involved in egg-laying. This chain is Beta-arrestin arr-1, found in Caenorhabditis elegans.